A 221-amino-acid chain; its full sequence is Imidazole glycerol phosphate synthase subunit HisH (221 aa).

The 213-residue stretch at Asp-9–Gln-221 folds into the Glutamine amidotransferase type-1 domain. The active-site Nucleophile is the Cys-84. Residues His-202 and Glu-204 contribute to the active site.

In terms of assembly, heterodimer of HisH and HisF.

Its subcellular location is the cytoplasm. It carries out the reaction 5-[(5-phospho-1-deoxy-D-ribulos-1-ylimino)methylamino]-1-(5-phospho-beta-D-ribosyl)imidazole-4-carboxamide + L-glutamine = D-erythro-1-(imidazol-4-yl)glycerol 3-phosphate + 5-amino-1-(5-phospho-beta-D-ribosyl)imidazole-4-carboxamide + L-glutamate + H(+). The enzyme catalyses L-glutamine + H2O = L-glutamate + NH4(+). Its pathway is amino-acid biosynthesis; L-histidine biosynthesis; L-histidine from 5-phospho-alpha-D-ribose 1-diphosphate: step 5/9. IGPS catalyzes the conversion of PRFAR and glutamine to IGP, AICAR and glutamate. The HisH subunit catalyzes the hydrolysis of glutamine to glutamate and ammonia as part of the synthesis of IGP and AICAR. The resulting ammonia molecule is channeled to the active site of HisF. This Shewanella oneidensis (strain ATCC 700550 / JCM 31522 / CIP 106686 / LMG 19005 / NCIMB 14063 / MR-1) protein is Imidazole glycerol phosphate synthase subunit HisH.